We begin with the raw amino-acid sequence, 384 residues long: MKPQQLATQKFSEHCGYSAAQTVFAPGRVNIIGEHTDYNDGFVMPCAINYGMAVSFSKRDDSVWRVYAIDIDEQDEFDLSRPIEPSEHKWANYVRGVVKYIQEKCPEFKQGADLAMTSDVPMSSGLSSSAALEISIGKTARVLGDLPLSLTEIALIGQQAENKFVGANCGNMDQLTSALGQKDQVIMIDCRSLDITPTPVPHGYSIAIINSNVKHDLVTGEYNSRRQECEFAARFFGVKALRDVTSERFIERAAELQAQNELAYKRAKHIISENQRVLEAVEALKANDMVKLGQLMAGSHDSMRDDFEITIPEIDYLVELAQVAIGKNGGARMTGGGFGGCIVCLVPDEKVEHLRRIIADNYEKQTGIKETFHLCTACDGVHLI.

A substrate-binding site is contributed by 34–37 (EHTD). 123 to 129 (SSGLSSS) is a binding site for ATP. Residues S129 and E161 each contribute to the Mg(2+) site. Catalysis depends on D173, which acts as the Proton acceptor. Residue Y222 coordinates substrate.

Belongs to the GHMP kinase family. GalK subfamily.

Its subcellular location is the cytoplasm. It carries out the reaction alpha-D-galactose + ATP = alpha-D-galactose 1-phosphate + ADP + H(+). It functions in the pathway carbohydrate metabolism; galactose metabolism. Its function is as follows. Catalyzes the transfer of the gamma-phosphate of ATP to D-galactose to form alpha-D-galactose-1-phosphate (Gal-1-P). The polypeptide is Galactokinase (Actinobacillus pleuropneumoniae (Haemophilus pleuropneumoniae)).